The following is a 120-amino-acid chain: Large ribosomal subunit protein bL17 (120 aa).

It belongs to the bacterial ribosomal protein bL17 family. As to quaternary structure, part of the 50S ribosomal subunit. Contacts protein L32.

This is Large ribosomal subunit protein bL17 from Bacillus subtilis (strain 168).